A 146-amino-acid chain; its full sequence is Large ribosomal subunit protein uL15 (146 aa).

The interval methionine 1 to glutamate 51 is disordered. Gly residues-rich tracts occupy residues threonine 23–glutamine 35 and serine 42–glutamate 51.

The protein belongs to the universal ribosomal protein uL15 family. In terms of assembly, part of the 50S ribosomal subunit.

In terms of biological role, binds to the 23S rRNA. The polypeptide is Large ribosomal subunit protein uL15 (Streptococcus sanguinis (strain SK36)).